Consider the following 119-residue polypeptide: Large ribosomal subunit protein uL14 (119 aa).

This sequence belongs to the universal ribosomal protein uL14 family. Part of the 50S ribosomal subunit. Forms a cluster with proteins L3 and L19. In the 70S ribosome, L14 and L19 interact and together make contacts with the 16S rRNA in bridges B5 and B8.

Functionally, binds to 23S rRNA. Forms part of two intersubunit bridges in the 70S ribosome. This is Large ribosomal subunit protein uL14 from Ehrlichia canis (strain Jake).